Reading from the N-terminus, the 126-residue chain is uncharacterized protein (126 aa).

This is an uncharacterized protein from Archaeoglobus fulgidus (strain ATCC 49558 / DSM 4304 / JCM 9628 / NBRC 100126 / VC-16).